The chain runs to 130 residues: Protein ApaG (130 aa).

An ApaG domain is found at 3-127; the sequence is RALTRDIEVT…FSLDSPGLMR (125 aa).

The chain is Protein ApaG from Agrobacterium fabrum (strain C58 / ATCC 33970) (Agrobacterium tumefaciens (strain C58)).